We begin with the raw amino-acid sequence, 364 residues long: Palmitoyltransferase ZDHHC9 (364 aa).

Residues 1–35 (MSVMVVRKKVTRKWEKLPGRNTFCCDGRVMMARQK) lie on the Cytoplasmic side of the membrane. Residues 36–56 (GIFYLTLFLILGTCTLFFAFE) traverse the membrane as a helical segment. At 57–63 (CRYLAVQ) the chain is on the lumenal side. The helical transmembrane segment at 64 to 84 (LSPAIPVFAAMLFLFSMATLL) threads the bilayer. At 85–183 (RTSFSDPGVI…NCVGKRNYRY (99 aa)) the chain is on the cytoplasmic side. The DHHC domain maps to 139–189 (KYCYTCKIFRPPRASHCSICDNCVERFDHHCPWVGNCVGKRNYRYFYLFIL). The active-site S-palmitoyl cysteine intermediate is Cys-169. The helical transmembrane segment at 184 to 204 (FYLFILSLSLLTIYVFAFNIV) threads the bilayer. Topologically, residues 205-228 (YVALKSLKIGFLETLKETPGTVLE) are lumenal. Residues 229-249 (VLICFFTLWSVVGLTGFHTFL) form a helical membrane-spanning segment. The Cytoplasmic segment spans residues 250 to 364 (VALNQTTNED…PPQEAAEAEK (115 aa)). The segment at 303 to 364 (PLEESGSRPP…PPQEAAEAEK (62 aa)) is disordered. Over residues 310–323 (RPPSTQETSSSLLP) the composition is skewed to polar residues. A compositionally biased stretch (pro residues) spans 346 to 356 (EMPPPEPPEPP).

It belongs to the DHHC palmitoyltransferase family. ERF2/ZDHHC9 subfamily. As to quaternary structure, interacts with GOLGA7. Highly expressed in kidney, skeletal muscle, brain, lung and liver. Absent in thymus, spleen and leukocytes.

The protein resides in the endoplasmic reticulum membrane. It localises to the golgi apparatus membrane. It carries out the reaction L-cysteinyl-[protein] + hexadecanoyl-CoA = S-hexadecanoyl-L-cysteinyl-[protein] + CoA. In terms of biological role, palmitoyltransferase that catalyzes the addition of palmitate onto various protein substrates, such as ADRB2, GSDMD, HRAS, NRAS and CGAS. The ZDHHC9-GOLGA7 complex is a palmitoyltransferase specific for HRAS and NRAS. May have a palmitoyltransferase activity toward the beta-2 adrenergic receptor/ADRB2 and therefore regulate G protein-coupled receptor signaling. Acts as a regulator of innate immunity by catalyzing palmitoylation of CGAS, thereby promoting CGAS homodimerization and cyclic GMP-AMP synthase activity. Activates pyroptosis by catalyzing palmitoylation of gasdermin-D (GSDMD), thereby promoting membrane translocation and pore formation of GSDMD. (Microbial infection) Through a sequential action with ZDHHC20, rapidly and efficiently palmitoylates SARS coronavirus-2/SARS-CoV-2 spike protein following its synthesis in the endoplasmic reticulum (ER). In the infected cell, promotes spike biogenesis by protecting it from premature ER degradation, increases half-life and controls the lipid organization of its immediate membrane environment. Once the virus has formed, spike palmitoylation controls fusion with the target cell. This Homo sapiens (Human) protein is Palmitoyltransferase ZDHHC9.